Reading from the N-terminus, the 176-residue chain is Ribosome maturation factor RimM (176 aa).

Residues 100 to 173 form the PRC barrel domain; sequence KDEYHYHDLI…WLLINPPPGL (74 aa).

It belongs to the RimM family. In terms of assembly, binds ribosomal protein uS19.

Its subcellular location is the cytoplasm. Functionally, an accessory protein needed during the final step in the assembly of 30S ribosomal subunit, possibly for assembly of the head region. Essential for efficient processing of 16S rRNA. May be needed both before and after RbfA during the maturation of 16S rRNA. It has affinity for free ribosomal 30S subunits but not for 70S ribosomes. This chain is Ribosome maturation factor RimM, found in Prochlorococcus marinus (strain NATL1A).